The following is a 331-amino-acid chain: Ribosomal RNA small subunit methyltransferase H (331 aa).

S-adenosyl-L-methionine-binding positions include 38 to 40 (GGY), Asp56, Phe83, Asp100, and Gln107. The segment at 287–331 (DEAELAENPRARSARLRVGVRTDAPAGKVDPQALGTPLIPKKGRR) is disordered.

This sequence belongs to the methyltransferase superfamily. RsmH family.

It localises to the cytoplasm. The catalysed reaction is cytidine(1402) in 16S rRNA + S-adenosyl-L-methionine = N(4)-methylcytidine(1402) in 16S rRNA + S-adenosyl-L-homocysteine + H(+). Functionally, specifically methylates the N4 position of cytidine in position 1402 (C1402) of 16S rRNA. In Cereibacter sphaeroides (strain KD131 / KCTC 12085) (Rhodobacter sphaeroides), this protein is Ribosomal RNA small subunit methyltransferase H.